The primary structure comprises 938 residues: Isoleucine--tRNA ligase (938 aa).

A 'HIGH' region motif is present at residues 58-68; the sequence is PYANGNIHLGH. L-isoleucyl-5'-AMP is bound at residue Glu562. Residues 603-607 carry the 'KMSKS' region motif; that stretch reads KMSKS. Lys606 contributes to the ATP binding site. Positions 901, 904, 921, and 924 each coordinate Zn(2+).

Belongs to the class-I aminoacyl-tRNA synthetase family. IleS type 1 subfamily. Monomer. Zn(2+) serves as cofactor.

Its subcellular location is the cytoplasm. The enzyme catalyses tRNA(Ile) + L-isoleucine + ATP = L-isoleucyl-tRNA(Ile) + AMP + diphosphate. Catalyzes the attachment of isoleucine to tRNA(Ile). As IleRS can inadvertently accommodate and process structurally similar amino acids such as valine, to avoid such errors it has two additional distinct tRNA(Ile)-dependent editing activities. One activity is designated as 'pretransfer' editing and involves the hydrolysis of activated Val-AMP. The other activity is designated 'posttransfer' editing and involves deacylation of mischarged Val-tRNA(Ile). In Glaesserella parasuis serovar 5 (strain SH0165) (Haemophilus parasuis), this protein is Isoleucine--tRNA ligase.